Here is a 438-residue protein sequence, read N- to C-terminus: 3-phosphoshikimate 1-carboxyvinyltransferase (438 aa).

Residues lysine 25, serine 26, and arginine 30 each contribute to the 3-phosphoshikimate site. Lysine 25 contributes to the phosphoenolpyruvate binding site. Phosphoenolpyruvate is bound by residues glycine 99 and arginine 128. The 3-phosphoshikimate site is built by serine 173, glutamine 175, aspartate 325, and lysine 352. Position 175 (glutamine 175) interacts with phosphoenolpyruvate. The active-site Proton acceptor is aspartate 325. Residues arginine 356 and arginine 398 each coordinate phosphoenolpyruvate.

Belongs to the EPSP synthase family. As to quaternary structure, monomer.

Its subcellular location is the cytoplasm. The enzyme catalyses 3-phosphoshikimate + phosphoenolpyruvate = 5-O-(1-carboxyvinyl)-3-phosphoshikimate + phosphate. It functions in the pathway metabolic intermediate biosynthesis; chorismate biosynthesis; chorismate from D-erythrose 4-phosphate and phosphoenolpyruvate: step 6/7. In terms of biological role, catalyzes the transfer of the enolpyruvyl moiety of phosphoenolpyruvate (PEP) to the 5-hydroxyl of shikimate-3-phosphate (S3P) to produce enolpyruvyl shikimate-3-phosphate and inorganic phosphate. This Prochlorococcus marinus (strain MIT 9515) protein is 3-phosphoshikimate 1-carboxyvinyltransferase.